Here is a 448-residue protein sequence, read N- to C-terminus: O-Mevalon transferase yanI (448 aa).

The N-linked (GlcNAc...) asparagine glycan is linked to Asn2. Helical transmembrane passes span Val21 to Val41, Tyr54 to Pro74, Ala79 to Phe96, Phe165 to Val185, Leu217 to Leu237, Met316 to Val336, Val350 to Leu370, and Ile390 to Leu410.

This sequence belongs to the wax synthase family.

It localises to the membrane. It functions in the pathway secondary metabolite biosynthesis; terpenoid biosynthesis. Functionally, O-Mevalon transferase yanI; part of the gene cluster that mediates the biosynthesis of yanuthone D, a fungal isoprenoid epoxycyclohexenone that acts as an antibiotic against fungi and bacteria. The first step of the pathway is the synthesis of 6-methylsalicylic acid (6-MSA) by the polyketide synthase yanA. 6-MSA is then converted to m-cresol by the decarboxylase yanB. The cytochrome P450 monooxygenase yanC then catalyzes the oxidation of m-cresol to toluquinol. Epoxidation of toluquinol is then performed by the short chain dehydrogenase yanD, with the help of yanE, and a further prenylation by yanG leads to 7-deacetoxyyanuthone A. The next step is the hydroxylation of C-22 of 7-deacetoxyyanuthone A by the cytochrome P450 monooxygenase yanH to yield 22-deacetylyanuthone A. O-Mevalon transferase yanI then attaches mevalon to the hydroxyl group of 22-deacetylyanuthone A to produce yanuthone E. Finally, the FAD-dependent monooxygenase yanF oxidizes the hydroxyl group at C15 of yanuthone E to form yanuthone D. Furthermore, several branching points in the pathway lead to the production of yanuthones F and G from 7-deacetoxyyanuthone A; yanuthones H and I from 22-deacetylyanuthone A; and yanuthone J from yanuthone E. This is O-Mevalon transferase yanI from Aspergillus niger (strain ATCC 1015 / CBS 113.46 / FGSC A1144 / LSHB Ac4 / NCTC 3858a / NRRL 328 / USDA 3528.7).